Reading from the N-terminus, the 333-residue chain is MRRNILSMFLFITLIIYSSIFAVNVRIKDFAKFRGARDNQLFGVGIVVGLNGTGDSGTLNSTLLSNMLKNFGVAVNPNDLKTKNAALVMVVADIPPFYKPGMRLDVEVASINDAKSLRNGILLQTPLYGADGNVYAVAQGPVSVGGEDVKGSVNLQKRFPVVGYIPEGALVEREIPFSIVDGNSVTILLNKPDFTTAARTALAINTKFGTNIAKALDGASVKVNIPNVFSDDVISFLALLEEIEVPVDVVAQVVINERTGTVVFGGDIGIADFVLSYGNFVITISNGQIGDKKATIGNLITALKSLGATPQDIIAVVQELYKAGVIFAQLKIM.

An N-terminal signal peptide occupies residues 1–22; that stretch reads MRRNILSMFLFITLIIYSSIFA.

This sequence belongs to the FlgI family. In terms of assembly, the basal body constitutes a major portion of the flagellar organelle and consists of four rings (L,P,S, and M) mounted on a central rod.

The protein resides in the periplasm. It is found in the bacterial flagellum basal body. Functionally, assembles around the rod to form the L-ring and probably protects the motor/basal body from shearing forces during rotation. This is Flagellar P-ring protein from Fervidobacterium nodosum (strain ATCC 35602 / DSM 5306 / Rt17-B1).